A 336-amino-acid chain; its full sequence is 3-hydroxyisobutyrate dehydrogenase, mitochondrial (336 aa).

The transit peptide at 1-36 directs the protein to the mitochondrion; it reads MAASLRLRGAASGLRYWSRRQPPAVASLAAVCSRSM. 40 to 69 contributes to the NAD(+) binding site; it reads TPVGFIGVGNMGNPMAKNLMKHGYPLIIYD. Residues Lys60 and Lys76 each carry the N6-acetyllysine; alternate modification. Residues Lys60 and Lys76 each carry the N6-succinyllysine; alternate modification. N6-succinyllysine is present on Lys95. NAD(+) contacts are provided by residues 103–104 and Asn108; that span reads LP. N6-acetyllysine is present on Lys121. Thr134 lines the NAD(+) pocket. Lys141 is subject to N6-succinyllysine. Lys145 is modified (N6-acetyllysine). Lys149 is modified (N6-acetyllysine; alternate). Lys149 is subject to N6-succinyllysine; alternate. Residue Lys209 is part of the active site. N6-acetyllysine; alternate occurs at positions 238 and 242. Lys238 and Lys242 each carry N6-succinyllysine; alternate. NAD(+) is bound at residue Lys284. Lys297 bears the N6-succinyllysine mark. Lys321 is modified (N6-acetyllysine; alternate). Lys321 is subject to N6-succinyllysine; alternate.

This sequence belongs to the HIBADH-related family. 3-hydroxyisobutyrate dehydrogenase subfamily. As to quaternary structure, homodimer.

It is found in the mitochondrion. The catalysed reaction is 3-hydroxy-2-methylpropanoate + NAD(+) = 2-methyl-3-oxopropanoate + NADH + H(+). Its pathway is amino-acid degradation; L-valine degradation. The polypeptide is 3-hydroxyisobutyrate dehydrogenase, mitochondrial (HIBADH) (Bos taurus (Bovine)).